The sequence spans 178 residues: Prion-like protein doppel (178 aa).

Positions 1 to 25 (MRKHLGGCWLAIVCVLLFSQLSSVK) are cleaved as a signal peptide. Positions 27 to 50 (RGIKHRIKWNRKVLPSTSQVTEAH) are flexible tail. Residues 51-154 (TAEIRPGAFI…KHCDFWLERG (104 aa)) form a globular region. Cystine bridges form between cysteine 94–cysteine 147 and cysteine 108–cysteine 142. 2 N-linked (GlcNAc...) asparagine glycosylation sites follow: asparagine 98 and asparagine 110. The tract at residues 124 to 141 (KQDNKLYQRVLWQLIREL) is cu(2+) binding. Glycine 154 carries GPI-anchor amidated glycine lipidation. Residues 155-178 (AGLQVTLDQPMMLCLLVFIWFIVK) constitute a propeptide, removed in mature form.

The protein belongs to the prion family. In terms of processing, N-glycosylated. O-glycosylated. In terms of tissue distribution, strongly expressed in testis. Detected at low levels in lymph node, spleen and ovary.

It localises to the cell membrane. Functionally, required for normal acrosome reaction and for normal male fertility. Can bind Cu(2+). The polypeptide is Prion-like protein doppel (PRND) (Ovis aries (Sheep)).